Consider the following 193-residue polypeptide: NADH-quinone oxidoreductase subunit B (193 aa).

[4Fe-4S] cluster contacts are provided by cysteine 72, cysteine 73, cysteine 137, and cysteine 167.

This sequence belongs to the complex I 20 kDa subunit family. NDH-1 is composed of 14 different subunits. Subunits NuoB, C, D, E, F, and G constitute the peripheral sector of the complex. The cofactor is [4Fe-4S] cluster.

The protein localises to the cell inner membrane. It catalyses the reaction a quinone + NADH + 5 H(+)(in) = a quinol + NAD(+) + 4 H(+)(out). In terms of biological role, NDH-1 shuttles electrons from NADH, via FMN and iron-sulfur (Fe-S) centers, to quinones in the respiratory chain. The immediate electron acceptor for the enzyme in this species is believed to be ubiquinone. Couples the redox reaction to proton translocation (for every two electrons transferred, four hydrogen ions are translocated across the cytoplasmic membrane), and thus conserves the redox energy in a proton gradient. The chain is NADH-quinone oxidoreductase subunit B from Rhizobium rhizogenes (strain K84 / ATCC BAA-868) (Agrobacterium radiobacter).